Consider the following 333-residue polypeptide: Putative transporter MamV (333 aa).

5 helical membrane passes run 19-39 (AWLD…LGVL), 86-106 (FLSA…MLWY), 111-131 (LGSG…LISA), 170-190 (VLAG…LAAI), and 191-211 (LVSL…IHGL).

It belongs to the cation diffusion facilitator (CDF) transporter (TC 2.A.4) family.

It is found in the cell inner membrane. Expression of just the minimal mamAB gene cluster (amb0961 to amb0978), including this gene, is sufficient to form a minimal magnetosome chain with small magnetite particles. The chain is Putative transporter MamV from Paramagnetospirillum magneticum (strain ATCC 700264 / AMB-1) (Magnetospirillum magneticum).